The sequence spans 403 residues: Synaptotagmin-7 (403 aa).

At 1–16 (MYRDPEAASPGAPSRD) the chain is on the vesicular side. The chain crosses the membrane as a helical span at residues 17-37 (VLLVSAIITVSLSVTVVLCGL). The Cytoplasmic segment spans residues 38-403 (CHWCQRKLGK…PVAQWHQLKA (366 aa)). Phosphoserine is present on S52. The interval 53–106 (LETVGTPDSGRGRSEKKAIKLPAGGKAVNTAPVPGQTPHDESDRRTEPRSSVSD) is disordered. At T58 the chain carries Phosphothreonine. S61 is subject to Phosphoserine. Residues 90–100 (PHDESDRRTEP) show a composition bias toward basic and acidic residues. Residues S119 and S122 each carry the phosphoserine modification. C2 domains lie at 135–255 (NLGR…TFWK) and 266–399 (SRGE…AQWH). Ca(2+)-binding residues include D166, D172, D225, D227, S230, D233, D297, D303, D357, D359, S362, and D365.

Belongs to the synaptotagmin family. Homodimer. Can also form heterodimers with SYT6, SYT9 and SYT10. Interacts with calmodulin (CALM1, CALM2 or CALM3). Interacts with CD63; required for localization to lysosomes. Interacts with APP. Ca(2+) serves as cofactor. Palmitoylated at its vesicular N-terminus; palmitoylation is required for localization to lysosome and phagocytosis in macrophages. Expressed in a variety of adult and fetal tissues.

It is found in the cell membrane. It localises to the presynaptic cell membrane. Its subcellular location is the cytoplasmic vesicle. The protein localises to the secretory vesicle. The protein resides in the synaptic vesicle membrane. It is found in the lysosome membrane. It localises to the phagosome membrane. Its subcellular location is the peroxisome membrane. The protein localises to the secretory vesicle membrane. Ca(2+) sensor involved in Ca(2+)-dependent exocytosis of secretory and synaptic vesicles through Ca(2+) and phospholipid binding to the C2 domain. Ca(2+) induces binding of the C2-domains to phospholipid membranes and to assembled SNARE-complexes; both actions contribute to triggering exocytosis. SYT7 binds Ca(2+) with high affinity and slow kinetics compared to other synaptotagmins. Involved in Ca(2+)-triggered lysosomal exocytosis, a major component of the plasma membrane repair. Ca(2+)-regulated delivery of lysosomal membranes to the cell surface is also involved in the phagocytic uptake of particles by macrophages. Ca(2+)-triggered lysosomal exocytosis also plays a role in bone remodeling by regulating secretory pathways in osteoclasts and osteoblasts. In case of infection, involved in participates cell invasion by Trypanosoma cruzi via Ca(2+)-triggered lysosomal exocytosis. Involved in cholesterol transport from lysosome to peroxisome by promoting membrane contacts between lysosomes and peroxisomes: probably acts by promoting vesicle fusion by binding phosphatidylinositol-4,5-bisphosphate on peroxisomal membranes. Acts as a key mediator of synaptic facilitation, a process also named short-term synaptic potentiation: synaptic facilitation takes place at synapses with a low initial release probability and is caused by influx of Ca(2+) into the axon terminal after spike generation, increasing the release probability of neurotransmitters. Probably mediates synaptic facilitation by directly increasing the probability of release. May also contribute to synaptic facilitation by regulating synaptic vesicle replenishment, a process required to ensure that synaptic vesicles are ready for the arrival of the next action potential: SYT7 is required for synaptic vesicle replenishment by acting as a sensor for Ca(2+) and by forming a complex with calmodulin. Also acts as a regulator of Ca(2+)-dependent insulin and glucagon secretion in beta-cells. Triggers exocytosis by promoting fusion pore opening and fusion pore expansion in chromaffin cells. Also regulates the secretion of some non-synaptic secretory granules of specialized cells. The sequence is that of Synaptotagmin-7 from Homo sapiens (Human).